The following is a 582-amino-acid chain: 2-succinyl-5-enolpyruvyl-6-hydroxy-3-cyclohexene-1-carboxylate synthase (582 aa).

The protein belongs to the TPP enzyme family. MenD subfamily. As to quaternary structure, homodimer. It depends on Mg(2+) as a cofactor. Mn(2+) is required as a cofactor. The cofactor is thiamine diphosphate.

It carries out the reaction isochorismate + 2-oxoglutarate + H(+) = 5-enolpyruvoyl-6-hydroxy-2-succinyl-cyclohex-3-ene-1-carboxylate + CO2. It participates in quinol/quinone metabolism; 1,4-dihydroxy-2-naphthoate biosynthesis; 1,4-dihydroxy-2-naphthoate from chorismate: step 2/7. It functions in the pathway cofactor biosynthesis; phylloquinone biosynthesis. Functionally, catalyzes the thiamine diphosphate-dependent decarboxylation of 2-oxoglutarate and the subsequent addition of the resulting succinic semialdehyde-thiamine pyrophosphate anion to isochorismate to yield 2-succinyl-5-enolpyruvyl-6-hydroxy-3-cyclohexene-1-carboxylate (SEPHCHC). The polypeptide is 2-succinyl-5-enolpyruvyl-6-hydroxy-3-cyclohexene-1-carboxylate synthase (Prochlorococcus marinus (strain MIT 9313)).